Here is a 462-residue protein sequence, read N- to C-terminus: Cysteine--tRNA ligase (462 aa).

Cys-28 lines the Zn(2+) pocket. A 'HIGH' region motif is present at residues 30-40 (VTIYDLCHIGH). Residues Cys-211, His-236, and Glu-240 each contribute to the Zn(2+) site. The 'KMSKS' region motif lies at 268 to 272 (KMSKS). Lys-271 lines the ATP pocket.

Belongs to the class-I aminoacyl-tRNA synthetase family. As to quaternary structure, monomer. It depends on Zn(2+) as a cofactor.

The protein resides in the cytoplasm. The enzyme catalyses tRNA(Cys) + L-cysteine + ATP = L-cysteinyl-tRNA(Cys) + AMP + diphosphate. The polypeptide is Cysteine--tRNA ligase (Aliivibrio salmonicida (strain LFI1238) (Vibrio salmonicida (strain LFI1238))).